Here is a 154-residue protein sequence, read N- to C-terminus: Prefoldin subunit 2 (154 aa).

Over residues 1-18 (MAENGGRAGKSSGSGTGK) the composition is skewed to gly residues. Disordered regions lie at residues 1 to 20 (MAEN…GKGA) and 124 to 154 (IRLM…VLVS). Residues 124–139 (IRLMGEDEKPAAKENS) show a composition bias toward basic and acidic residues. Residues 140–154 (EGAGAKASSAGVLVS) show a composition bias toward low complexity.

This sequence belongs to the prefoldin subunit beta family. Heterohexamer of two PFD-alpha type and four PFD-beta type subunits. Component of the PAQosome complex which is responsible for the biogenesis of several protein complexes and which consists of R2TP complex members RUVBL1, RUVBL2, RPAP3 and PIH1D1, URI complex members PFDN2, PFDN6, PDRG1, UXT and URI1 as well as ASDURF, POLR2E and DNAAF10/WDR92. Interacts with URI1; the interaction is phosphorylation-dependent and occurs in a growth-dependent manner.

Its subcellular location is the nucleus. It is found in the cytoplasm. It localises to the mitochondrion. Its function is as follows. Binds specifically to cytosolic chaperonin (c-CPN) and transfers target proteins to it. Binds to nascent polypeptide chain and promotes folding in an environment in which there are many competing pathways for nonnative proteins. The sequence is that of Prefoldin subunit 2 (PFDN2) from Bos taurus (Bovine).